A 378-amino-acid chain; its full sequence is Cobalt-precorrin-5B C(1)-methyltransferase (378 aa).

It belongs to the CbiD family.

It carries out the reaction Co-precorrin-5B + S-adenosyl-L-methionine = Co-precorrin-6A + S-adenosyl-L-homocysteine. Its pathway is cofactor biosynthesis; adenosylcobalamin biosynthesis; cob(II)yrinate a,c-diamide from sirohydrochlorin (anaerobic route): step 6/10. Its function is as follows. Catalyzes the methylation of C-1 in cobalt-precorrin-5B to form cobalt-precorrin-6A. This chain is Cobalt-precorrin-5B C(1)-methyltransferase, found in Methanococcus aeolicus (strain ATCC BAA-1280 / DSM 17508 / OCM 812 / Nankai-3).